A 121-amino-acid chain; its full sequence is Small ribosomal subunit protein bS6 (121 aa).

The protein belongs to the bacterial ribosomal protein bS6 family.

Functionally, binds together with bS18 to 16S ribosomal RNA. The chain is Small ribosomal subunit protein bS6 from Rickettsia canadensis (strain McKiel).